The primary structure comprises 334 residues: MSEPIRVLVTGAAGQIAYSLLYSIGNGSVFGKDQPIILVLLDITPMMGVLDGVLMELQDCALPLLKDVIATDKEDVAFKDLDVAILVGSMPRREGMERKDLLKANVKIFKSQGAALDKYAKKSVKVIVVGNPANTNCLTASKSAPSIPKENFSCLTRLDHNRAKAQIALKLGVTANDVKNVIIWGNHSSTQYPDVNHAKVKLQGKEVGVYEALKDDSWLKGEFVTTVQQRGAAVIKARKLSSAMSAAKAICDHVRDIWFGTPEGEFVSMGVISDGNSYGVPDDLLYSFPVVIKNKTWKFVEGLPINDFSREKMDLTAKELTEEKESAFEFLSSA.

The residue at position 2 (S2) is an N-acetylserine. Residues 11 to 17 (GAAGQIA) and D42 contribute to the NAD(+) site. 2 residues coordinate substrate: R92 and R98. N105 is an NAD(+) binding site. Residue K110 is modified to N6-succinyllysine. Q112 lines the NAD(+) pocket. N6-acetyllysine occurs at positions 118 and 121. 129–131 (VGN) is an NAD(+) binding site. N131 and R162 together coordinate substrate. Residue H187 is the Proton acceptor of the active site. At K214 the chain carries N6-succinyllysine. S217 is subject to Phosphoserine. R230 bears the Omega-N-methylarginine mark. S241 is subject to Phosphoserine. Residue K298 is modified to N6-acetyllysine; alternate. The residue at position 298 (K298) is an N6-succinyllysine; alternate. S309 is subject to Phosphoserine. K318 is subject to N6-succinyllysine. Phosphoserine occurs at positions 332 and 333.

Belongs to the LDH/MDH superfamily. MDH type 2 family. Homodimer. In terms of processing, ISGylated. Post-translationally, acetylation at Lys-118 dramatically enhances enzymatic activity and promotes adipogenic differentiation.

The protein resides in the cytoplasm. The protein localises to the cytosol. The catalysed reaction is (S)-malate + NAD(+) = oxaloacetate + NADH + H(+). The enzyme catalyses (2R)-2-hydroxy-3-(4-hydroxyphenyl)propanoate + NAD(+) = 3-(4-hydroxyphenyl)pyruvate + NADH + H(+). It carries out the reaction (S)-2-hydroxyglutarate + NAD(+) = 2-oxoglutarate + NADH + H(+). Functionally, catalyzes the reduction of aromatic alpha-keto acids in the presence of NADH. Plays essential roles in the malate-aspartate shuttle and the tricarboxylic acid cycle, important in mitochondrial NADH supply for oxidative phosphorylation. Catalyzes the reduction of 2-oxoglutarate to 2-hydroxyglutarate, leading to elevated reactive oxygen species (ROS). This Homo sapiens (Human) protein is Malate dehydrogenase, cytoplasmic.